The chain runs to 199 residues: Recombination protein RecR (199 aa).

The C4-type zinc finger occupies 56 to 71; sequence CTVCFNVTEQETCNIC. Residues 79–174 enclose the Toprim domain; the sequence is SVICVVEESK…TVTRLASGLP (96 aa).

This sequence belongs to the RecR family.

Functionally, may play a role in DNA repair. It seems to be involved in an RecBC-independent recombinational process of DNA repair. It may act with RecF and RecO. This Paenarthrobacter aurescens (strain TC1) protein is Recombination protein RecR.